Here is a 277-residue protein sequence, read N- to C-terminus: Glutamate racemase (277 aa).

Substrate is bound by residues 25–26 and 57–58; these read DS and YG. The active-site Proton donor/acceptor is the Cys89. 90–91 serves as a coordination point for substrate; that stretch reads NT. Cys204 acts as the Proton donor/acceptor in catalysis. 205 to 206 provides a ligand contact to substrate; it reads TH.

Belongs to the aspartate/glutamate racemases family.

The catalysed reaction is L-glutamate = D-glutamate. It participates in cell wall biogenesis; peptidoglycan biosynthesis. In terms of biological role, provides the (R)-glutamate required for cell wall biosynthesis. The polypeptide is Glutamate racemase (Brucella ovis (strain ATCC 25840 / 63/290 / NCTC 10512)).